A 220-amino-acid chain; its full sequence is Sugar transporter SWEET1 (220 aa).

A run of 7 helical transmembrane segments spans residues 9 to 29, 44 to 64, 70 to 90, 106 to 126, 138 to 158, 167 to 187, and 191 to 211; these read LMTF…IMPL, VAGL…SYAL, TMLF…FNYW, VMIA…NTVD, LSSV…AIVI, IINV…FGLL, and IYIY…LTLI. The MtN3/slv 1 domain maps to 12–92; that stretch reads FIQFCATFIT…IYYVFNYWKN (81 aa). The MtN3/slv 2 domain occupies 134–217; sequence RLGFLSSVVC…LTLIKLYPPQ (84 aa).

This sequence belongs to the SWEET sugar transporter family.

It is found in the golgi apparatus membrane. It localises to the cell membrane. In terms of biological role, mediates both low-affinity uptake and efflux of sugar across the membrane. The sequence is that of Sugar transporter SWEET1 (slc50a1) from Dictyostelium discoideum (Social amoeba).